Reading from the N-terminus, the 131-residue chain is Large ribosomal subunit protein bL17 (131 aa).

The protein belongs to the bacterial ribosomal protein bL17 family. Part of the 50S ribosomal subunit. Contacts protein L32.

This Chromobacterium violaceum (strain ATCC 12472 / DSM 30191 / JCM 1249 / CCUG 213 / NBRC 12614 / NCIMB 9131 / NCTC 9757 / MK) protein is Large ribosomal subunit protein bL17.